The chain runs to 432 residues: DNA damage-binding protein 2 (432 aa).

A disordered region spans residues 1-31 (MAPKKCPETQKSPDVAVLLRSKSRRGPQELE). 2 positions are modified to N6-acetyllysine: Lys35 and Lys77. 2 required for interaction with DDB1 regions span residues 68–79 (SIVRDLYQHKLG) and 87–98 (QQGLQKSFLHSL). WD repeat units follow at residues 116 to 151 (SLAWHPTHPSTLAVGSKGGDIMIWNFGIKDKPIFLK), 159 to 194 (ITGLKFNHLNTNQFFASSMEGTTRLQDFKGNILRVY), 203 to 238 (WFCSLDVSAKSRVVVTGDNMGHVILLSTDGKELWNL), 244 to 287 (KVAH…SLPH), and 290 to 329 (PVNAACFSPDGARLLTTDQNNEIRVYSASQWDSPLNLISH). A DWD box motif is present at residues 256 to 274 (WLLATASIDQTVKIWDLRQ). The photolesion recognition stretch occupies residues 334–336 (FQH). 2 WD repeats span residues 343 to 386 (TWHS…MCQL) and 396 to 420 (SLNEFNPMGDTLASTMGYHILIWSQ).

This sequence belongs to the WD repeat DDB2/WDR76 family. In terms of assembly, component of the UV-DDB complex which includes DDB1 and DDB2. The UV-DDB complex interacts with monoubiquitinated histone H2A and binds to XPC via the DDB2 subunit. Component of the DCX (DDB1-CUL4-X-box) E3 ubiquitin-protein ligase complex DDB1-CUL4-ROC1 (also known as CUL4-DDB-ROC1 and CUL4-DDB-RBX1), which includes CUL4A or CUL4B, DDB1, DDB2 and RBX1. DDB2 may function as the substrate recognition module within this complex. The DDB1-CUL4-ROC1 complex may associate with the COP9 signalosome, and this inhibits the E3 ubiquitin-protein ligase activity of the complex. A large number of other DCX complexes may also exist in which an alternate substrate targeting subunit replaces DDB2. These targeting subunits are generally known as DCAF (DDB1- and CUL4-associated factor) or CDW (CUL4-DDB1-associated WD40-repeat) proteins. Phosphorylation by ABL1 negatively regulate UV-DDB activity. In terms of processing, ubiquitinated by CUL4A in response to UV irradiation. Ubiquitination appears to both impair DNA-binding and promotes ubiquitin-dependent proteolysis. Degradation of DDB2 at sites of DNA damage may be a prerequisite for their recognition by XPC and subsequent repair. CUL4A-mediated degradation appears to be promoted by ABL1. Post-translationally, ubiquitinated, leading to proteasomal degradation, and deubiquitinated by USP24. Deubiquitinated by USP44; leading to its stabilization on DNA lesions. Acetylated. Deacetylation by SIRT6 in response to UV stress facilitates nucleotide excision repair pathway (the NER pathway) transduction. As to expression, expressed in bone marrow, liver, lung, muscle, pancreas and spleen.

The protein localises to the nucleus. The protein resides in the chromosome. It functions in the pathway protein modification; protein ubiquitination. In terms of biological role, protein, which is both involved in DNA repair and protein ubiquitination, as part of the UV-DDB complex and DCX (DDB1-CUL4-X-box) complexes, respectively. Core component of the UV-DDB complex (UV-damaged DNA-binding protein complex), a complex that recognizes UV-induced DNA damage and recruit proteins of the nucleotide excision repair pathway (the NER pathway) to initiate DNA repair. The UV-DDB complex preferentially binds to cyclobutane pyrimidine dimers (CPD), 6-4 photoproducts (6-4 PP), apurinic sites and short mismatches. Also functions as the substrate recognition module for the DCX (DDB2-CUL4-X-box) E3 ubiquitin-protein ligase complex DDB2-CUL4-ROC1 (also known as CUL4-DDB-ROC1 and CUL4-DDB-RBX1). The DDB2-CUL4-ROC1 complex may ubiquitinate histone H2A, histone H3 and histone H4 at sites of UV-induced DNA damage. The ubiquitination of histones may facilitate their removal from the nucleosome and promote subsequent DNA repair. The DDB2-CUL4-ROC1 complex also ubiquitinates XPC, which may enhance DNA-binding by XPC and promote NER. The DDB2-CUL4-ROC1 complex also ubiquitinates KAT7/HBO1 in response to DNA damage, leading to its degradation: recognizes KAT7/HBO1 following phosphorylation by ATR. The sequence is that of DNA damage-binding protein 2 (Ddb2) from Mus musculus (Mouse).